A 507-amino-acid chain; its full sequence is MTVAEAETYWTALAGLPRPTLKELFSDAGRLDRYAATLDLPGGPIRFDWSKTHLSAEVEAVFAALASAMDFEGRRAALIEGAKINNTEGRAAEHTAQRGIGNEASVEEAEALHARMRMLVDAIHAGALGEVRSLIHIGIGGSALGPALAIDALTRDGAKVAVHVVSNIDGCALEAAMKACDPATTMIAVASKTFTTTETMTNAASALEWLRENGVADPYGQVVALTAAPEKAVEWGVDETRVLPFSETVGGRYSLWSSIGFPVAMALGWEGFAAFLDGAAAIDRHFIDADLAGNVVVRAAFADLYYTQVRGCQTRAVFAYDERLALLPDYLQQLEMESNGKRVLADGSPLTRPSAPVTWGGVGTDAQHAVFQLLHQGTHLIPVDFLAVKTQGHDLDPAHHQILLSNCFAQGAALMAGKASDDGARAYPGDRPSATILCDDLNPATLGALIAFHEHRTFVSAVMLGINPFDQFGVELGKAIAKQIESGGGEGFDPSTEALLAAVGLAG.

The active-site Proton donor is Glu-337. Catalysis depends on residues His-368 and Lys-478.

The protein belongs to the GPI family.

Its subcellular location is the cytoplasm. The enzyme catalyses alpha-D-glucose 6-phosphate = beta-D-fructose 6-phosphate. It functions in the pathway carbohydrate biosynthesis; gluconeogenesis. The protein operates within carbohydrate degradation; glycolysis; D-glyceraldehyde 3-phosphate and glycerone phosphate from D-glucose: step 2/4. Catalyzes the reversible isomerization of glucose-6-phosphate to fructose-6-phosphate. This chain is Glucose-6-phosphate isomerase, found in Novosphingobium aromaticivorans (strain ATCC 700278 / DSM 12444 / CCUG 56034 / CIP 105152 / NBRC 16084 / F199).